We begin with the raw amino-acid sequence, 699 residues long: SPS-sensor serine protease component SSY5 (699 aa).

Disordered stretches follow at residues 1–113 and 129–158; these read MVRF…LQGF and VKEE…GNAR. A propeptide spanning residues 1 to 381 is cleaved from the precursor; that stretch reads MVRFFGLNKK…YCVKDYIKKA (381 aa). Residues 24 to 38 show a composition bias toward polar residues; it reads NEQNAAETSSSNVSG. Residues 39–51 are compositionally biased toward basic and acidic residues; it reads NEERIDPNSHDAN. The span at 52 to 78 shows a compositional bias: low complexity; the sequence is PENANNDDASTTFGSSIQSSSIFSRGR. The segment covering 83–93 has biased composition (polar residues); the sequence is TGASSSMATSE. Low complexity-rich tracts occupy residues 97–109 and 144–154; these read HSSG…NSKN and SSSTSSTLATS. Positions 459-699 are serine protease; the sequence is FAITCAHVVL…QWDIDPQLDG (241 aa). Catalysis depends on charge relay system residues histidine 465, aspartate 545, and serine 640.

It belongs to the peptidase S64 family. Component of the plasma membrane SPS (SSY1-PTR3-SSY5) amino acid sensor complex. In terms of processing, the propeptide is autoproteolytically cleaved from the catalytic domain but remains associated, forming an inactive protease complex. This processing occurs even in the absence of signaling.

The protein localises to the cell membrane. Protease component of the SPS-sensor system, which regulates the expression of several amino acid-metabolizing enzymes and amino acid- and peptide-permeases in response to extracellular amino acid levels by controlling the activity of two transcription factors, STP1 and STP2. Catalyzes the activation of these transcription factors, which are synthesized as latent cytoplasmic precursors, by proteolytic removal of an N-terminal inhibitory domain containing cytoplasmic retention motifs. SSY5 binds as an inactive protease complex to STP1. In response to extracellular amino acids and dependent on the other SPS-sensor components, the inhibitory propeptide is induced to dissociate, and thereby enables the catalytic domain to process STP1. The sequence is that of SPS-sensor serine protease component SSY5 (SSY5) from Saccharomyces cerevisiae (strain YJM789) (Baker's yeast).